A 552-amino-acid chain; its full sequence is ATP synthase subunit alpha (552 aa).

ATP is bound at residue Gly-173 to Thr-180. The disordered stretch occupies residues Ala-526 to Gly-552. A compositionally biased stretch (basic and acidic residues) spans Ala-533 to Gly-552.

It belongs to the ATPase alpha/beta chains family. F-type ATPases have 2 components, CF(1) - the catalytic core - and CF(0) - the membrane proton channel. CF(1) has five subunits: alpha(3), beta(3), gamma(1), delta(1), epsilon(1). CF(0) has three main subunits: a(1), b(2) and c(9-12). The alpha and beta chains form an alternating ring which encloses part of the gamma chain. CF(1) is attached to CF(0) by a central stalk formed by the gamma and epsilon chains, while a peripheral stalk is formed by the delta and b chains.

It is found in the cell membrane. The enzyme catalyses ATP + H2O + 4 H(+)(in) = ADP + phosphate + 5 H(+)(out). In terms of biological role, produces ATP from ADP in the presence of a proton gradient across the membrane. The alpha chain is a regulatory subunit. The polypeptide is ATP synthase subunit alpha (Frankia alni (strain DSM 45986 / CECT 9034 / ACN14a)).